The primary structure comprises 292 residues: Elongation factor Ts (292 aa).

The segment at 81-84 (TDFV) is involved in Mg(2+) ion dislocation from EF-Tu.

Belongs to the EF-Ts family.

Its subcellular location is the cytoplasm. Functionally, associates with the EF-Tu.GDP complex and induces the exchange of GDP to GTP. It remains bound to the aminoacyl-tRNA.EF-Tu.GTP complex up to the GTP hydrolysis stage on the ribosome. The protein is Elongation factor Ts of Acidithiobacillus ferrooxidans (strain ATCC 23270 / DSM 14882 / CIP 104768 / NCIMB 8455) (Ferrobacillus ferrooxidans (strain ATCC 23270)).